The sequence spans 202 residues: Guanylyl cyclase-activating protein 1 (202 aa).

A lipid anchor (N-myristoyl glycine) is attached at glycine 2. Asparagine 3 is modified (deamidated asparagine). 4 consecutive EF-hand domains span residues 31–49 (SGQL…KNLS), 51–86 (SASQ…VLKG), 87–122 (KVEQ…IRTI), and 131–166 (SAEE…DQML). Ca(2+) contacts are provided by aspartate 64, asparagine 66, aspartate 68, tyrosine 70, glutamate 75, aspartate 100, aspartate 102, asparagine 104, cysteine 106, glutamate 111, aspartate 144, asparagine 146, aspartate 148, glutamate 150, and glutamate 155.

Homodimer. In the retina, expressed in rod photoreceptors (at protein level). Expressed in cone photoreceptors.

It is found in the membrane. Its subcellular location is the photoreceptor inner segment. The protein localises to the cell projection. The protein resides in the cilium. It localises to the photoreceptor outer segment. Stimulates retinal guanylyl cyclase when free calcium ions concentration is low and inhibits guanylyl cyclase when free calcium ions concentration is elevated. This Ca(2+)-sensitive regulation of retinal guanylyl cyclase is a key event in recovery of the dark state of rod photoreceptors following light exposure. May be involved in cone photoreceptor light response and recovery of response in bright light. This is Guanylyl cyclase-activating protein 1 (Guca1a) from Mus musculus (Mouse).